Here is a 450-residue protein sequence, read N- to C-terminus: Crinkler effector protein 63 (450 aa).

Positions M1 to P17 are cleaved as a signal peptide. Residues V18–T55 are LQLFLAK domain. The DWL domain stretch occupies residues G58–I117. N103 carries N-linked (GlcNAc...) asparagine glycosylation. The HVLVXXP motif signature appears at H118–P124. The tract at residues E125–S450 is effector domain. The short motif at Q218–R224 is the Nuclear localization signal (NLS) element. N342 carries N-linked (GlcNAc...) asparagine glycosylation.

Belongs to the Crinkler effector family. Forms a homodimer via an inverted association manner. Forms heterodimers with CRN79 and CRN115.

Its subcellular location is the secreted. It localises to the host nucleus. The protein resides in the host nucleoplasm. Its function is as follows. Secreted effector that, with CRN115, is critical to pathogenesis by modulating host defenses. Induces cell death in plant host cells. Suppresses callose deposition and affects expression of defense-related genes including two salicylic acid (SA) signal-induced and antimicrobial PR genes (PR1 and PR2), and genes involved in jasmonic acid (JA)/ethylene (ET)-mediated defense pathway (ERF1, ORA59, PDF1.2). CRN115 and CRN63 may share the same molecular host targets that are involved in the cell death signal transduction pathway and that their differential activities are dependent on plant nuclear localization or not. Does not affect MAPK activation and BIK1 phosphorylation and acts downstream of the MAPK cascades in PTI signaling. The chain is Crinkler effector protein 63 from Phytophthora sojae (strain P6497) (Soybean stem and root rot agent).